A 250-amino-acid chain; its full sequence is Bcl-2-like protein 12 (250 aa).

Residues 24 to 46 are disordered; the sequence is GEAAGSPVPTPPRSPAQEEPTDF. Phosphoserine is present on serine 29. Threonine 33 bears the Phosphothreonine mark. Serine 37 carries the post-translational modification Phosphoserine. At arginine 60 the chain carries Omega-N-methylarginine. 5 positions are modified to phosphoserine: serine 111, serine 158, serine 159, serine 161, and serine 189. A BH2 motif is present at residues 227–238; the sequence is WIQAHGGWEGIL.

It belongs to the Bcl-2 family. As to expression, expressed mainly in breast, thymus, prostate, fetal liver, colon, placenta, pancreas, small intestine, spinal cord, kidney, and bone marrow and to a lesser extent in many other tissues. Isoform 2 is primarily expressed in skeletal muscle.

In Homo sapiens (Human), this protein is Bcl-2-like protein 12.